The chain runs to 448 residues: MGQGTPGGMGKQGGAPGDRKPGGDGDKKDRKFEPPAAPSRVGRKQRKQKGPEAAARLPNVAPLSKCRLRLLKLERVKDYLLMEEEFVAAQERLRPTEDKTEEDRSKVDDLRGTPMSVGSLEEIIDESHAIVSSSVGPEYYVGILSFVDKDQLEPGCSILMHNKVLSVVGILQDEVDPMVSVMKVEKAPLESYADIGGLDAQIQEIKEAVELPLTHPELYEDIGIRPPKGVILYGEPGTGKTLLAKAVANSTSATFLRVVGSELIQKYLGDGPKLVRELFRVADELSPSIVFIDEIDAVGTKRYDAHSGGEREIQRTMLELLNQLDGFDSRGDVKVILATNRIESLDPALLRPGRIDRKIEFPLPDIKTRRRIFQIHTSKMTLADDVNLEEFVMTKDEFSGADIKAICTEAGLLALRERRMKVTHADFKKAKEKVMFKKKEGVPEGLYM.

A compositionally biased stretch (gly residues) spans methionine 1–proline 16. 2 disordered regions span residues methionine 1–arginine 56 and leucine 93–glycine 112. Composition is skewed to basic and acidic residues over residues glycine 17–glutamate 33 and leucine 93–arginine 111. ATP is bound at residue glycine 234–threonine 241.

Belongs to the AAA ATPase family.

The protein localises to the cytoplasm. It is found in the nucleus. The 26S proteasome is involved in the ATP-dependent degradation of ubiquitinated proteins. The regulatory (or ATPase) complex confers ATP dependency and substrate specificity to the 26S complex. The chain is 26S proteasome regulatory subunit 4 homolog (TBP2) from Oryza sativa subsp. japonica (Rice).